We begin with the raw amino-acid sequence, 382 residues long: Galactokinase (382 aa).

34–37 (EHTD) lines the substrate pocket. 124-130 (GAGLSSS) is an ATP binding site. Mg(2+) is bound by residues S130 and E162. D174 functions as the Proton acceptor in the catalytic mechanism. Y223 is a substrate binding site.

This sequence belongs to the GHMP kinase family. GalK subfamily.

Its subcellular location is the cytoplasm. It carries out the reaction alpha-D-galactose + ATP = alpha-D-galactose 1-phosphate + ADP + H(+). Its pathway is carbohydrate metabolism; galactose metabolism. In terms of biological role, catalyzes the transfer of the gamma-phosphate of ATP to D-galactose to form alpha-D-galactose-1-phosphate (Gal-1-P). The polypeptide is Galactokinase (Erwinia tasmaniensis (strain DSM 17950 / CFBP 7177 / CIP 109463 / NCPPB 4357 / Et1/99)).